The primary structure comprises 148 residues: Urease accessory protein UreE (148 aa).

Belongs to the UreE family.

Its subcellular location is the cytoplasm. Functionally, involved in urease metallocenter assembly. Binds nickel. Probably functions as a nickel donor during metallocenter assembly. The sequence is that of Urease accessory protein UreE from Nostoc punctiforme (strain ATCC 29133 / PCC 73102).